The sequence spans 61 residues: Small ribosomal subunit protein uS14 (61 aa).

Zn(2+) is bound by residues Cys-24, Cys-27, Cys-40, and Cys-43.

This sequence belongs to the universal ribosomal protein uS14 family. Zinc-binding uS14 subfamily. Part of the 30S ribosomal subunit. Contacts proteins S3 and S10. The cofactor is Zn(2+).

Binds 16S rRNA, required for the assembly of 30S particles and may also be responsible for determining the conformation of the 16S rRNA at the A site. In Natranaerobius thermophilus (strain ATCC BAA-1301 / DSM 18059 / JW/NM-WN-LF), this protein is Small ribosomal subunit protein uS14.